A 138-amino-acid polypeptide reads, in one-letter code: Brain natriuretic peptide (138 aa).

An N-terminal signal peptide occupies residues 1-22 (MRLSSMWLCSLLLILKLQLSST). Disordered regions lie at residues 50-84 (EQMA…AGLD) and 99-138 (SVRN…PKQR). An intrachain disulfide couples cysteine 111 to cysteine 127.

The protein belongs to the natriuretic peptide family.

The protein localises to the secreted. Its function is as follows. Cardiac hormone which may function as a paracrine antifibrotic factor in the heart. Also plays a key role in cardiovascular homeostasis through natriuresis, diuresis, vasorelaxation, and inhibition of renin and aldosterone secretion. The polypeptide is Brain natriuretic peptide (nppb) (Oreochromis mossambicus (Mozambique tilapia)).